The following is a 222-amino-acid chain: Riboflavin kinase (222 aa).

Positions 1 to 94 are H-T-H motif-like; it reads METIDAEDAA…AKIFDVKDEQ (94 aa). Positions 95-222 are riboflavin kinase; sequence YVLTGTVMSG…ENSEVVVVIG (128 aa). Position 104–109 (104–109) interacts with CDP; the sequence is GVGEGR. Mg(2+)-binding residues include Thr133 and Asn135. Thr190 and Glu198 together coordinate FMN. Residue 203–206 participates in CDP binding; the sequence is TQLR.

Belongs to the archaeal riboflavin kinase family. The cofactor is Mg(2+).

The enzyme catalyses riboflavin + CTP = CDP + FMN + H(+). Its pathway is cofactor biosynthesis; FMN biosynthesis; FMN from riboflavin (CTP route): step 1/1. Catalyzes the CTP-dependent phosphorylation of riboflavin (vitamin B2) to form flavin mononucleotide (FMN). In Methanocorpusculum labreanum (strain ATCC 43576 / DSM 4855 / Z), this protein is Riboflavin kinase (ribK).